Reading from the N-terminus, the 284-residue chain is 4-hydroxybenzoate octaprenyltransferase (284 aa).

9 helical membrane passes run 19-39, 42-62, 85-105, 107-127, 134-154, 165-185, 211-231, 233-253, and 261-281; these read IPIL…SHGL, ISYL…GCII, GQLS…VAFI, VLFL…LAIL, FFAI…FMAF, AWIF…IYAL, ILLF…YCDF, SFFY…YFLY, and CINA…IAVI.

This sequence belongs to the UbiA prenyltransferase family. The cofactor is Mg(2+).

Its subcellular location is the cell inner membrane. It carries out the reaction all-trans-octaprenyl diphosphate + 4-hydroxybenzoate = 4-hydroxy-3-(all-trans-octaprenyl)benzoate + diphosphate. Its pathway is cofactor biosynthesis; ubiquinone biosynthesis. Functionally, catalyzes the prenylation of para-hydroxybenzoate (PHB) with an all-trans polyprenyl group. Mediates the second step in the final reaction sequence of ubiquinone-8 (UQ-8) biosynthesis, which is the condensation of the polyisoprenoid side chain with PHB, generating the first membrane-bound Q intermediate 3-octaprenyl-4-hydroxybenzoate. This chain is 4-hydroxybenzoate octaprenyltransferase, found in Francisella tularensis subsp. holarctica (strain LVS).